We begin with the raw amino-acid sequence, 578 residues long: Arginine--tRNA ligase (578 aa).

The short motif at 127 to 137 (PNLAKEMHVGH) is the 'HIGH' region element.

Belongs to the class-I aminoacyl-tRNA synthetase family. In terms of assembly, monomer.

The protein localises to the cytoplasm. The catalysed reaction is tRNA(Arg) + L-arginine + ATP = L-arginyl-tRNA(Arg) + AMP + diphosphate. The polypeptide is Arginine--tRNA ligase (Pseudomonas putida (strain ATCC 47054 / DSM 6125 / CFBP 8728 / NCIMB 11950 / KT2440)).